Reading from the N-terminus, the 142-residue chain is Hemoglobin subunit alpha (142 aa).

A Globin domain is found at 2-142; sequence VLSPADKTNV…VSTVLTSKYR (141 aa). Ser4 is modified (phosphoserine). Lys8 is modified (N6-succinyllysine). The residue at position 9 (Thr9) is a Phosphothreonine. The residue at position 12 (Lys12) is an N6-succinyllysine. N6-acetyllysine; alternate is present on Lys17. N6-succinyllysine; alternate is present on Lys17. Residue Tyr25 is modified to Phosphotyrosine. A Phosphoserine modification is found at Ser36. Lys41 carries the N6-succinyllysine modification. Ser50 carries the phosphoserine modification. Residue His59 coordinates O2. Residue His88 participates in heme b binding. Ser103 is modified (phosphoserine). At Thr109 the chain carries Phosphothreonine. Ser125 is subject to Phosphoserine. Phosphothreonine is present on residues Thr135 and Thr138. Phosphoserine is present on Ser139.

Belongs to the globin family. Heterotetramer of two alpha chains and two beta chains. As to expression, red blood cells.

Its function is as follows. Involved in oxygen transport from the lung to the various peripheral tissues. In terms of biological role, hemopressin acts as an antagonist peptide of the cannabinoid receptor CNR1. Hemopressin-binding efficiently blocks cannabinoid receptor CNR1 and subsequent signaling. The chain is Hemoglobin subunit alpha (HBA) from Ailurus fulgens (Himalayan red panda).